Here is a 41-residue protein sequence, read N- to C-terminus: Fibrinogen beta chain (41 aa).

The disordered stretch occupies residues 1 to 41 (ADDYDDEVLPDARGHRPIDRKREELPSLRPAPPPISGGGYR). Tyr4 is modified (sulfotyrosine). Over residues 10 to 26 (PDARGHRPIDRKREELP) the composition is skewed to basic and acidic residues. The beta-chain polymerization, binding distal domain of another fibrin stretch occupies residues 14 to 16 (GHR).

In terms of assembly, heterohexamer; disulfide linked. Contains 2 sets of 3 non-identical chains (alpha, beta and gamma). The 2 heterotrimers are in head to head conformation with the N-termini in a small central domain. In terms of processing, conversion of fibrinogen to fibrin is triggered by thrombin, which cleaves fibrinopeptides A and B from alpha and beta chains, and thus exposes the N-terminal polymerization sites responsible for the formation of the soft clot.

It is found in the secreted. Cleaved by the protease thrombin to yield monomers which, together with fibrinogen alpha (FGA) and fibrinogen gamma (FGG), polymerize to form an insoluble fibrin matrix. Fibrin has a major function in hemostasis as one of the primary components of blood clots. In addition, functions during the early stages of wound repair to stabilize the lesion and guide cell migration during re-epithelialization. Was originally thought to be essential for platelet aggregation, based on in vitro studies using anticoagulated blood. However subsequent studies have shown that it is not absolutely required for thrombus formation in vivo. Enhances expression of SELP in activated platelets. Maternal fibrinogen is essential for successful pregnancy. Fibrin deposition is also associated with infection, where it protects against IFNG-mediated hemorrhage. May also facilitate the antibacterial immune response via both innate and T-cell mediated pathways. The protein is Fibrinogen beta chain (FGB) of Oryctolagus cuniculus (Rabbit).